The chain runs to 158 residues: MQGRLSAWLVKRGLIHRSLGFDYQGIETLQIKPKDWHSIAVILYVYGYNYLRSQCAYDVAPGGLLASVYHLTRIEYGGDQPEEVCIKVFASRRNPRIPSVFWVWKSVDFQERESYDMLGISYDNHPRLKRILMPESWIGWPLRKDYIAPNFYEIQDAH.

This sequence belongs to the complex I 30 kDa subunit family. NDH is composed of at least 16 different subunits, 5 of which are encoded in the nucleus.

It is found in the plastid. It localises to the chloroplast thylakoid membrane. The catalysed reaction is a plastoquinone + NADH + (n+1) H(+)(in) = a plastoquinol + NAD(+) + n H(+)(out). The enzyme catalyses a plastoquinone + NADPH + (n+1) H(+)(in) = a plastoquinol + NADP(+) + n H(+)(out). In terms of biological role, NDH shuttles electrons from NAD(P)H:plastoquinone, via FMN and iron-sulfur (Fe-S) centers, to quinones in the photosynthetic chain and possibly in a chloroplast respiratory chain. The immediate electron acceptor for the enzyme in this species is believed to be plastoquinone. Couples the redox reaction to proton translocation, and thus conserves the redox energy in a proton gradient. This chain is NAD(P)H-quinone oxidoreductase subunit J, chloroplastic, found in Jasminum nudiflorum (Winter jasmine).